The following is a 227-amino-acid chain: ATP-dependent dethiobiotin synthetase BioD (227 aa).

13–18 (DIGKTY) is an ATP binding site. Thr17 provides a ligand contact to Mg(2+). Lys38 is a catalytic residue. Ser42 contacts substrate. ATP is bound by residues Asp55, 116-119 (EGSG), and 179-180 (NN). Mg(2+) is bound by residues Asp55 and Glu116.

The protein belongs to the dethiobiotin synthetase family. Homodimer. It depends on Mg(2+) as a cofactor.

The protein localises to the cytoplasm. It carries out the reaction (7R,8S)-7,8-diammoniononanoate + CO2 + ATP = (4R,5S)-dethiobiotin + ADP + phosphate + 3 H(+). Its pathway is cofactor biosynthesis; biotin biosynthesis; biotin from 7,8-diaminononanoate: step 1/2. In terms of biological role, catalyzes a mechanistically unusual reaction, the ATP-dependent insertion of CO2 between the N7 and N8 nitrogen atoms of 7,8-diaminopelargonic acid (DAPA, also called 7,8-diammoniononanoate) to form a ureido ring. This is ATP-dependent dethiobiotin synthetase BioD from Clostridium botulinum (strain Langeland / NCTC 10281 / Type F).